A 79-amino-acid chain; its full sequence is CDC42 small effector protein 1-B (79 aa).

2 S-palmitoyl cysteine lipidation sites follow: Cys10 and Cys11. The 14-residue stretch at 30 to 43 folds into the CRIB domain; the sequence is IGEPMNFVHLTHIG. Residues 41 to 79 are disordered; sequence HIGSGDMGASDGLPKAGTVQEQMRSKCGRDRQWSNSRVL. The span at 63–72 shows a compositional bias: basic and acidic residues; that stretch reads MRSKCGRDRQ.

This sequence belongs to the CDC42SE/SPEC family.

It localises to the cytoplasm. It is found in the cytoskeleton. The protein localises to the cell membrane. In terms of biological role, probably involved in the organization of the actin cytoskeleton by acting downstream of CDC42, inducing actin filament assembly. The protein is CDC42 small effector protein 1-B (cdc42se1-b) of Xenopus laevis (African clawed frog).